Reading from the N-terminus, the 112-residue chain is Ferredoxin-2 (112 aa).

4Fe-4S ferredoxin-type domains lie at 2-30 (TYVV…YEGE) and 31-60 (NTLV…PDTE). Residues cysteine 9 and cysteine 17 each coordinate [3Fe-4S] cluster. Residues cysteine 21, cysteine 40, cysteine 43, and cysteine 46 each coordinate [4Fe-4S] cluster. Residue cysteine 50 coordinates [3Fe-4S] cluster. A compositionally biased stretch (basic and acidic residues) spans 85-103 (DPMPDHKKYDGETGKREKY). Residues 85–112 (DPMPDHKKYDGETGKREKYFSPNPGTGD) are disordered.

The cofactor is [4Fe-4S] cluster. [3Fe-4S] cluster serves as cofactor.

Functionally, ferredoxins are iron-sulfur proteins that transfer electrons in a wide variety of metabolic reactions. The protein is Ferredoxin-2 (fdxA) of Rhodobacter capsulatus (strain ATCC BAA-309 / NBRC 16581 / SB1003).